An 86-amino-acid chain; its full sequence is 4-hydroxyphenylacetate decarboxylase small subunit (86 aa).

[4Fe-4S] cluster is bound by residues His-3, Cys-6, Cys-19, Cys-36, Cys-45, Cys-48, Cys-62, and Cys-80.

The protein belongs to the HPA decarboxylase small subunit family. In terms of assembly, heterooctamer consisting of 4 large (HpdB) subunits and 4 small (HpdC) subunits, arranged as a tetramer of heterodimers. [4Fe-4S] cluster is required as a cofactor.

The enzyme catalyses 4-hydroxyphenylacetate + H(+) = 4-methylphenol + CO2. It carries out the reaction 3,4-dihydroxyphenylacetate + H(+) = 4-methylcatechol + CO2. In terms of biological role, component of the HPA decarboxylase that decarboxylates phenylacetates with a hydroxyl group in the p-position. Active toward 4-hydroxyphenylacetate and 3,4-dihydroxyphenylacetate, forming 4-methylphenol and 4-methylcatechol, respectively. Is likely involved in the catabolism of aromatic amino acids such as tyrosine fermentation. 4-methylphenol (p-cresol) formation provides metabolic toxicity, which allows an active suppression of other microbes and may provide growth advantages for the producers in highly competitive environments. The small subunit is essential for enzymatic activity of HPA decarboxylase, and also seems to be involved in the regulation of the enzyme oligomeric state and catalytic activity. This Clostridium scatologenes protein is 4-hydroxyphenylacetate decarboxylase small subunit.